We begin with the raw amino-acid sequence, 120 residues long: Large ribosomal subunit protein uL18 (120 aa).

It belongs to the universal ribosomal protein uL18 family. In terms of assembly, part of the 50S ribosomal subunit; part of the 5S rRNA/L5/L18/L25 subcomplex. Contacts the 5S and 23S rRNAs.

Its function is as follows. This is one of the proteins that bind and probably mediate the attachment of the 5S RNA into the large ribosomal subunit, where it forms part of the central protuberance. The protein is Large ribosomal subunit protein uL18 of Methylorubrum extorquens (strain CM4 / NCIMB 13688) (Methylobacterium extorquens).